The chain runs to 804 residues: Ribonucleoside-diphosphate reductase large subunit (804 aa).

The ATP-cone domain maps to 1–92 (MYVLNRKGEE…TDNLHKNTSD (92 aa)). ATP-binding positions include 5–6 (NR), 11–17 (EDISFDQ), Thr53, and Asp57. Ser216 contacts GDP. Residues Cys217 and Cys442 are joined by a disulfide bond. DTTP contacts are provided by residues 225–227 (DSI), Lys242, Arg255, and 262–263 (RG). Residue Asn425 coordinates GDP. Asn425 functions as the Proton acceptor in the catalytic mechanism. The active-site Cysteine radical intermediate is Cys427. Residues Glu429 and 603-606 (TAST) contribute to the GDP site. The Proton acceptor role is filled by Glu429.

The protein belongs to the ribonucleoside diphosphate reductase large chain family. Heterodimer of a large and a small subunit.

It catalyses the reaction a 2'-deoxyribonucleoside 5'-diphosphate + [thioredoxin]-disulfide + H2O = a ribonucleoside 5'-diphosphate + [thioredoxin]-dithiol. Under complex allosteric control mediated by deoxynucleoside triphosphates and ATP binding to separate specificity and activation sites on the large subunit. The type of nucleotide bound at the specificity site determines substrate preference. It seems probable that ATP makes the enzyme reduce CDP and UDP, dGTP favors ADP reduction and dTTP favors GDP reduction. Stimulated by ATP and inhibited by dATP binding to the activity site. Its function is as follows. Provides the precursors necessary for DNA synthesis. Catalyzes the biosynthesis of deoxyribonucleotides from the corresponding ribonucleotides. This Plasmodium falciparum (isolate FCR-3 / Gambia) protein is Ribonucleoside-diphosphate reductase large subunit (RNR1).